The following is a 674-amino-acid chain: Translation factor GUF1, mitochondrial (674 aa).

Residues 1–48 (MRGCLQPARWLTTATLRRPLLSCPRQLPTRYNPFPRPFHHAPVLQARQ) constitute a mitochondrion transit peptide. A tr-type G domain is found at 66 to 246 (ERYRNFCIVA…AIIESIPALL (181 aa)). GTP contacts are provided by residues 75–82 (AHVDHGKS), 139–143 (DTPGH), and 193–196 (NKVD).

The protein belongs to the TRAFAC class translation factor GTPase superfamily. Classic translation factor GTPase family. LepA subfamily.

The protein localises to the mitochondrion inner membrane. It carries out the reaction GTP + H2O = GDP + phosphate + H(+). Promotes mitochondrial protein synthesis. May act as a fidelity factor of the translation reaction, by catalyzing a one-codon backward translocation of tRNAs on improperly translocated ribosomes. Binds to mitochondrial ribosomes in a GTP-dependent manner. The chain is Translation factor GUF1, mitochondrial from Arthroderma otae (strain ATCC MYA-4605 / CBS 113480) (Microsporum canis).